A 184-amino-acid polypeptide reads, in one-letter code: ATP synthase subunit b, chloroplastic (184 aa).

The chain crosses the membrane as a helical span at residues 27 to 49 (LATNPINLSVVLGVLIFFGKGVL).

It belongs to the ATPase B chain family. In terms of assembly, F-type ATPases have 2 components, F(1) - the catalytic core - and F(0) - the membrane proton channel. F(1) has five subunits: alpha(3), beta(3), gamma(1), delta(1), epsilon(1). F(0) has four main subunits: a(1), b(1), b'(1) and c(10-14). The alpha and beta chains form an alternating ring which encloses part of the gamma chain. F(1) is attached to F(0) by a central stalk formed by the gamma and epsilon chains, while a peripheral stalk is formed by the delta, b and b' chains.

The protein resides in the plastid. The protein localises to the chloroplast thylakoid membrane. In terms of biological role, f(1)F(0) ATP synthase produces ATP from ADP in the presence of a proton or sodium gradient. F-type ATPases consist of two structural domains, F(1) containing the extramembraneous catalytic core and F(0) containing the membrane proton channel, linked together by a central stalk and a peripheral stalk. During catalysis, ATP synthesis in the catalytic domain of F(1) is coupled via a rotary mechanism of the central stalk subunits to proton translocation. Functionally, component of the F(0) channel, it forms part of the peripheral stalk, linking F(1) to F(0). The polypeptide is ATP synthase subunit b, chloroplastic (Eucalyptus globulus subsp. globulus (Tasmanian blue gum)).